Consider the following 260-residue polypeptide: Thiazole synthase (260 aa).

K100 serves as the catalytic Schiff-base intermediate with DXP. 1-deoxy-D-xylulose 5-phosphate-binding positions include G162, 188-189 (AG), and 210-211 (NT).

It belongs to the ThiG family. Homotetramer. Forms heterodimers with either ThiH or ThiS.

It is found in the cytoplasm. It catalyses the reaction [ThiS sulfur-carrier protein]-C-terminal-Gly-aminoethanethioate + 2-iminoacetate + 1-deoxy-D-xylulose 5-phosphate = [ThiS sulfur-carrier protein]-C-terminal Gly-Gly + 2-[(2R,5Z)-2-carboxy-4-methylthiazol-5(2H)-ylidene]ethyl phosphate + 2 H2O + H(+). The protein operates within cofactor biosynthesis; thiamine diphosphate biosynthesis. Functionally, catalyzes the rearrangement of 1-deoxy-D-xylulose 5-phosphate (DXP) to produce the thiazole phosphate moiety of thiamine. Sulfur is provided by the thiocarboxylate moiety of the carrier protein ThiS. In vitro, sulfur can be provided by H(2)S. The sequence is that of Thiazole synthase from Wolinella succinogenes (strain ATCC 29543 / DSM 1740 / CCUG 13145 / JCM 31913 / LMG 7466 / NCTC 11488 / FDC 602W) (Vibrio succinogenes).